Consider the following 358-residue polypeptide: Ion-translocating oxidoreductase complex subunit D (358 aa).

Transmembrane regions (helical) follow at residues 19-39 (IMLW…YYFG), 41-61 (GVLL…FIAI), 79-99 (LTAL…VIII), and 125-145 (IGYV…MPPI). Thr-186 is modified (FMN phosphoryl threonine). Helical transmembrane passes span 220 to 240 (FAQG…FLIL), 248 to 268 (IPVA…FTGF), 271 to 291 (LSAI…FIAT), 297 to 317 (SITP…VYLI), and 321 to 341 (GNYP…VPLI).

This sequence belongs to the NqrB/RnfD family. In terms of assembly, the complex is composed of six subunits: RnfA, RnfB, RnfC, RnfD, RnfE and RnfG. FMN is required as a cofactor.

The protein resides in the cell inner membrane. Its function is as follows. Part of a membrane-bound complex that couples electron transfer with translocation of ions across the membrane. This chain is Ion-translocating oxidoreductase complex subunit D, found in Haemophilus influenzae (strain PittEE).